The sequence spans 1665 residues: Mediator of RNA polymerase II transcription subunit 13 (1665 aa).

4 disordered regions span residues 411 to 460, 482 to 512, 551 to 580, and 673 to 781; these read KETE…IDKN, INLD…ETKP, TVSQ…GTET, and LDSS…NQIS. Positions 415 to 445 are enriched in acidic residues; sequence PENESENDMEIDDLFGGDESDDNDDLEEAGN. Over residues 499-512 the composition is skewed to basic and acidic residues; sequence VPDKENFKPKETKP. The span at 551 to 568 shows a compositional bias: low complexity; that stretch reads TVSQSAVTTNPPSVGSAP. A compositionally biased stretch (acidic residues) spans 682–720; it reads EGGEDIEDDDNDYEDEGDDDEEEEGEEEEEEESDEDEIS. Positions 728–762 are enriched in polar residues; that stretch reads LKLNTQNESVPPQQSNYNPVNITDSGSNTTNNITD.

This sequence belongs to the Mediator complex subunit 13 family. As to quaternary structure, component of the SRB8-11 complex, which itself associates with the Mediator complex.

It localises to the nucleus. Component of the SRB8-11 complex. The SRB8-11 complex is a regulatory module of the Mediator complex which is itself involved in regulation of basal and activated RNA polymerase II-dependent transcription. The SRB8-11 complex may be involved in the transcriptional repression of a subset of genes regulated by Mediator. It may inhibit the association of the Mediator complex with RNA polymerase II to form the holoenzyme complex. The protein is Mediator of RNA polymerase II transcription subunit 13 (SSN2) of Candida albicans (strain SC5314 / ATCC MYA-2876) (Yeast).